Consider the following 25-residue polypeptide: Antimicrobial peptide 2 (25 aa).

As to expression, expressed by the skin glands.

It localises to the secreted. Its function is as follows. Has very strong antibacterial activity against Gram-positive bacterium S.aureus and very weak activity against Gram-negative bacterium E.coli. The chain is Antimicrobial peptide 2 from Xenopus tropicalis (Western clawed frog).